The primary structure comprises 636 residues: Probable potassium transport system protein Kup (636 aa).

The next 12 helical transmembrane spans lie at 23 to 43, 57 to 77, 111 to 131, 148 to 168, 179 to 199, 217 to 237, 258 to 278, 287 to 307, 348 to 368, 377 to 397, 409 to 429, and 431 to 451; these read MALMLGALGVVYGDIGTSPLY, PAHVLGVLSILFWLLMIVVSL, WLLIVLGIFGAALFYGDSMIT, HTLEPWVVPVALVVLVALFAI, LFGPIMALWFATLAVLGGYQI, FIAEFPVMSFLLLGAVVLALT, WFAMVLPALTLCYFGQGALLL, PFFLMAPEWGLAALVGLATVA, IYLPQVNALLLCAVLVLVLLF, AYGFAVTGTMLTTSVLAFAVL, WMVLLGALLVIDILLFGANIF, and IHEGGWLPLLVGVVVFTLMMT.

This sequence belongs to the HAK/KUP transporter (TC 2.A.72) family.

Its subcellular location is the cell inner membrane. It carries out the reaction K(+)(in) + H(+)(in) = K(+)(out) + H(+)(out). Functionally, transport of potassium into the cell. Likely operates as a K(+):H(+) symporter. The chain is Probable potassium transport system protein Kup from Bordetella bronchiseptica (strain ATCC BAA-588 / NCTC 13252 / RB50) (Alcaligenes bronchisepticus).